A 203-amino-acid polypeptide reads, in one-letter code: Large ribosomal subunit protein uL18 (203 aa).

This sequence belongs to the universal ribosomal protein uL18 family. As to quaternary structure, part of the 50S ribosomal subunit. Contacts the 5S and 23S rRNAs.

This is one of the proteins that bind and probably mediate the attachment of the 5S RNA into the large ribosomal subunit, where it forms part of the central protuberance. This is Large ribosomal subunit protein uL18 from Pyrococcus furiosus (strain ATCC 43587 / DSM 3638 / JCM 8422 / Vc1).